A 450-amino-acid chain; its full sequence is Tripartite motif-containing protein 77 (450 aa).

The RING-type zinc finger occupies 15–56 (CSICTDYLTDPVTICCGHRFCSPCLCLLWEDTLTPNCCPVCR). A B box-type zinc finger spans residues 88 to 131 (SAMLICRRHQEIKNLICETDRSLLCFLCSQSPRHATHKHYMTRE). Cys-93, His-96, Cys-115, and His-121 together coordinate Zn(2+). The B30.2/SPRY domain occupies 269–450 (QLSAWTITGV…LRPFICHGSK (182 aa)).

It belongs to the TRIM/RBCC family.

This is Tripartite motif-containing protein 77 (TRIM77) from Homo sapiens (Human).